The primary structure comprises 121 residues: Small ribosomal subunit protein uS11c (121 aa).

This sequence belongs to the universal ribosomal protein uS11 family. Part of the 30S ribosomal subunit.

Its subcellular location is the plastid. The protein localises to the chloroplast. The chain is Small ribosomal subunit protein uS11c from Cyanidioschyzon merolae (strain NIES-3377 / 10D) (Unicellular red alga).